Reading from the N-terminus, the 358-residue chain is GTPase Obg (358 aa).

Residues Met1–Ile159 enclose the Obg domain. The region spanning Ala160–Gly327 is the OBG-type G domain. GTP contacts are provided by residues Gly166–Ser173, Phe191–His195, Asp212–Gly215, Asn279–Asp282, and Ser308–Val310. Residues Ser173 and Thr193 each contribute to the Mg(2+) site. Positions Ala335 to Pro358 are disordered.

The protein belongs to the TRAFAC class OBG-HflX-like GTPase superfamily. OBG GTPase family. As to quaternary structure, monomer. Mg(2+) serves as cofactor.

Its subcellular location is the cytoplasm. In terms of biological role, an essential GTPase which binds GTP, GDP and possibly (p)ppGpp with moderate affinity, with high nucleotide exchange rates and a fairly low GTP hydrolysis rate. Plays a role in control of the cell cycle, stress response, ribosome biogenesis and in those bacteria that undergo differentiation, in morphogenesis control. The chain is GTPase Obg from Nitrobacter winogradskyi (strain ATCC 25391 / DSM 10237 / CIP 104748 / NCIMB 11846 / Nb-255).